The chain runs to 904 residues: HTH-type transcriptional regulator MalT (904 aa).

Residue 39 to 46 coordinates ATP; the sequence is CPAGYGKT. In terms of domain architecture, HTH luxR-type spans 832–897; the sequence is ELIRTSPLTQ…EAVQQAQQLL (66 aa). The H-T-H motif DNA-binding region spans 856 to 875; it reads NDQIAGELAVAATTIKTHIR.

The protein belongs to the MalT family. Monomer in solution. Oligomerizes to an active state in the presence of the positive effectors ATP and maltotriose.

Its activity is regulated as follows. Activated by ATP and maltotriose, which are both required for DNA binding. In terms of biological role, positively regulates the transcription of the maltose regulon whose gene products are responsible for uptake and catabolism of malto-oligosaccharides. Specifically binds to the promoter region of its target genes, recognizing a short DNA motif called the MalT box. This is HTH-type transcriptional regulator MalT from Serratia proteamaculans (strain 568).